The primary structure comprises 435 residues: tRNA modification GTPase MnmE (435 aa).

(6S)-5-formyl-5,6,7,8-tetrahydrofolate contacts are provided by arginine 20, glutamate 77, and lysine 117. Residues glycine 214–leucine 359 enclose the TrmE-type G domain. Residues asparagine 224 to serine 229, threonine 243 to threonine 249, and aspartate 268 to glycine 271 contribute to the GTP site. The Mg(2+) site is built by serine 228 and threonine 249. Lysine 435 contacts (6S)-5-formyl-5,6,7,8-tetrahydrofolate.

This sequence belongs to the TRAFAC class TrmE-Era-EngA-EngB-Septin-like GTPase superfamily. TrmE GTPase family. In terms of assembly, homodimer. Heterotetramer of two MnmE and two MnmG subunits. K(+) serves as cofactor.

The protein resides in the cytoplasm. In terms of biological role, exhibits a very high intrinsic GTPase hydrolysis rate. Involved in the addition of a carboxymethylaminomethyl (cmnm) group at the wobble position (U34) of certain tRNAs, forming tRNA-cmnm(5)s(2)U34. The sequence is that of tRNA modification GTPase MnmE from Bartonella bacilliformis (strain ATCC 35685 / KC583 / Herrer 020/F12,63).